Here is a 165-residue protein sequence, read N- to C-terminus: Endoribonuclease YbeY (165 aa).

Positions 130, 134, and 140 each coordinate Zn(2+).

Belongs to the endoribonuclease YbeY family. Zn(2+) is required as a cofactor.

It localises to the cytoplasm. In terms of biological role, single strand-specific metallo-endoribonuclease involved in late-stage 70S ribosome quality control and in maturation of the 3' terminus of the 16S rRNA. This Streptococcus thermophilus (strain CNRZ 1066) protein is Endoribonuclease YbeY.